Here is a 166-residue protein sequence, read N- to C-terminus: Cyclin-dependent kinase 4 inhibitor D (166 aa).

An N-acetylmethionine modification is found at Met1. ANK repeat units lie at residues 41–69, 73–102, 106–135, and 138–166; these read FGKT…SPNV, SGTT…DVNA, TGAL…LHHR, and TGLT…VAPL.

The protein belongs to the CDKN2 cyclin-dependent kinase inhibitor family. In terms of assembly, interacts with CDK6.

The protein resides in the nucleus. It localises to the cytoplasm. Functionally, interacts strongly with CDK4 and CDK6 and inhibits them. The sequence is that of Cyclin-dependent kinase 4 inhibitor D (CDKN2D) from Bos taurus (Bovine).